The primary structure comprises 152 residues: Large ribosomal subunit protein bL9 (152 aa).

This sequence belongs to the bacterial ribosomal protein bL9 family.

Its function is as follows. Binds to the 23S rRNA. The polypeptide is Large ribosomal subunit protein bL9 (Pelagibacter ubique (strain HTCC1062)).